Consider the following 205-residue polypeptide: Holliday junction branch migration complex subunit RuvA (205 aa).

A domain I region spans residues 1 to 64 (MIGKLKGSIE…EDQLKLFGFV (64 aa)). The tract at residues 65 to 143 (SALEREWFNL…AFAGDASASI (79 aa)) is domain II. Positions 144-153 (GLKQELGEGV) are flexible linker. Residues 153–205 (VASAPVADAVSALTNLGYSRDQAANAVAAALKNGGEGGDSAKLIRLGLKELSR) are domain III.

Belongs to the RuvA family. In terms of assembly, homotetramer. Forms an RuvA(8)-RuvB(12)-Holliday junction (HJ) complex. HJ DNA is sandwiched between 2 RuvA tetramers; dsDNA enters through RuvA and exits via RuvB. An RuvB hexamer assembles on each DNA strand where it exits the tetramer. Each RuvB hexamer is contacted by two RuvA subunits (via domain III) on 2 adjacent RuvB subunits; this complex drives branch migration. In the full resolvosome a probable DNA-RuvA(4)-RuvB(12)-RuvC(2) complex forms which resolves the HJ.

The protein localises to the cytoplasm. Its function is as follows. The RuvA-RuvB-RuvC complex processes Holliday junction (HJ) DNA during genetic recombination and DNA repair, while the RuvA-RuvB complex plays an important role in the rescue of blocked DNA replication forks via replication fork reversal (RFR). RuvA specifically binds to HJ cruciform DNA, conferring on it an open structure. The RuvB hexamer acts as an ATP-dependent pump, pulling dsDNA into and through the RuvAB complex. HJ branch migration allows RuvC to scan DNA until it finds its consensus sequence, where it cleaves and resolves the cruciform DNA. In Agrobacterium fabrum (strain C58 / ATCC 33970) (Agrobacterium tumefaciens (strain C58)), this protein is Holliday junction branch migration complex subunit RuvA.